The following is a 415-amino-acid chain: Adipocyte plasma membrane-associated protein (415 aa).

The disordered stretch occupies residues 1 to 30; that stretch reads MNEAEGLRQRRPLRPQVITEDSPAQEAKEG. Topologically, residues 1–39 are cytoplasmic; it reads MNEAEGLRQRRPLRPQVITEDSPAQEAKEGSAYSSKVFR. Residues 40–60 traverse the membrane as a helical segment; that stretch reads VTFLTLAASLAVPLLGATVLL. Over 61 to 412 the chain is Extracellular; that stretch reads DCPIDPQPIS…RSPFICRLNL (352 aa). The N-linked (GlcNAc...) asparagine glycan is linked to asparagine 159.

The protein belongs to the strictosidine synthase family.

It is found in the membrane. The sequence is that of Adipocyte plasma membrane-associated protein (APMAP) from Gallus gallus (Chicken).